Here is a 479-residue protein sequence, read N- to C-terminus: ATP synthase subunit beta (479 aa).

168 to 175 (GGAGVGKT) contacts ATP.

It belongs to the ATPase alpha/beta chains family. In terms of assembly, F-type ATPases have 2 components, CF(1) - the catalytic core - and CF(0) - the membrane proton channel. CF(1) has five subunits: alpha(3), beta(3), gamma(1), delta(1), epsilon(1). CF(0) has three main subunits: a(1), b(2) and c(9-12). The alpha and beta chains form an alternating ring which encloses part of the gamma chain. CF(1) is attached to CF(0) by a central stalk formed by the gamma and epsilon chains, while a peripheral stalk is formed by the delta and b chains.

It localises to the cell membrane. The enzyme catalyses ATP + H2O + 4 H(+)(in) = ADP + phosphate + 5 H(+)(out). Produces ATP from ADP in the presence of a proton gradient across the membrane. The catalytic sites are hosted primarily by the beta subunits. The polypeptide is ATP synthase subunit beta (Parafrankia sp. (strain EAN1pec)).